Reading from the N-terminus, the 521-residue chain is Ribonuclease Y (521 aa).

A helical transmembrane segment spans residues 5–25 (MMTMILAVIAAAIGFLIGNLL). The KH domain maps to 211–271 (TVSVVALPSD…VRREVAKLSL (61 aa)). The HD domain occupies 337–430 (VYQHSLEVAF…VQAADALSGA (94 aa)).

It belongs to the RNase Y family.

The protein resides in the cell membrane. Functionally, endoribonuclease that initiates mRNA decay. The sequence is that of Ribonuclease Y from Geotalea uraniireducens (strain Rf4) (Geobacter uraniireducens).